The primary structure comprises 205 residues: Polyamine-modulated factor 1 (205 aa).

Positions M1–P28 are disordered. Positions Y140–L190 form a coiled coil.

As to quaternary structure, component of the MIS12 complex composed of MIS12, DSN1, NSL1 and PMF1. Interacts with COPS7A. Interacts via its coiled-coil domain with the leucine-zipper domain of NFE2L2. The interaction with NFE2L2 is required for the transcriptional regulation of SSAT.

It localises to the nucleus. Its subcellular location is the chromosome. It is found in the centromere. The protein localises to the kinetochore. In terms of biological role, part of the MIS12 complex which is required for normal chromosome alignment and segregation and kinetochore formation during mitosis. May act as a cotranscription partner of NFE2L2 involved in regulation of polyamine-induced transcription of SSAT. This is Polyamine-modulated factor 1 (PMF1) from Bos taurus (Bovine).